Here is a 639-residue protein sequence, read N- to C-terminus: 1-deoxy-D-xylulose-5-phosphate synthase (639 aa).

Thiamine diphosphate is bound by residues H79 and 120–122 (GHS). A Mg(2+)-binding site is contributed by D151. Thiamine diphosphate-binding positions include 152-153 (GG), N180, Y288, and E370. N180 is a binding site for Mg(2+).

This sequence belongs to the transketolase family. DXPS subfamily. Homodimer. The cofactor is Mg(2+). Thiamine diphosphate serves as cofactor.

It carries out the reaction D-glyceraldehyde 3-phosphate + pyruvate + H(+) = 1-deoxy-D-xylulose 5-phosphate + CO2. It participates in metabolic intermediate biosynthesis; 1-deoxy-D-xylulose 5-phosphate biosynthesis; 1-deoxy-D-xylulose 5-phosphate from D-glyceraldehyde 3-phosphate and pyruvate: step 1/1. Its function is as follows. Catalyzes the acyloin condensation reaction between C atoms 2 and 3 of pyruvate and glyceraldehyde 3-phosphate to yield 1-deoxy-D-xylulose-5-phosphate (DXP). The polypeptide is 1-deoxy-D-xylulose-5-phosphate synthase (Methylococcus capsulatus (strain ATCC 33009 / NCIMB 11132 / Bath)).